A 106-amino-acid chain; its full sequence is Cell division topological specificity factor (106 aa).

It belongs to the MinE family.

In terms of biological role, prevents the cell division inhibition by proteins MinC and MinD at internal division sites while permitting inhibition at polar sites. This ensures cell division at the proper site by restricting the formation of a division septum at the midpoint of the long axis of the cell. This is Cell division topological specificity factor from Prochlorococcus marinus subsp. pastoris (strain CCMP1986 / NIES-2087 / MED4).